Reading from the N-terminus, the 409-residue chain is Argininosuccinate synthase (409 aa).

An ATP-binding site is contributed by 10-18; sequence AYSGGLDTS. Residue tyrosine 87 participates in L-citrulline binding. An ATP-binding site is contributed by glycine 117. Residues threonine 119, asparagine 123, and aspartate 124 each coordinate L-aspartate. An L-citrulline-binding site is contributed by asparagine 123. Residues arginine 127, serine 175, serine 184, glutamate 260, and tyrosine 272 each coordinate L-citrulline.

Belongs to the argininosuccinate synthase family. Type 1 subfamily. Homotetramer.

It is found in the cytoplasm. The enzyme catalyses L-citrulline + L-aspartate + ATP = 2-(N(omega)-L-arginino)succinate + AMP + diphosphate + H(+). Its pathway is amino-acid biosynthesis; L-arginine biosynthesis; L-arginine from L-ornithine and carbamoyl phosphate: step 2/3. The polypeptide is Argininosuccinate synthase (Rubrobacter xylanophilus (strain DSM 9941 / JCM 11954 / NBRC 16129 / PRD-1)).